A 302-amino-acid polypeptide reads, in one-letter code: Pentatricopeptide repeat-containing protein At4g38150 (302 aa).

The segment covering 26–40 has biased composition (polar residues); the sequence is SATRFLSTGDNGQVD. Disordered regions lie at residues 26 to 82 and 94 to 116; these read SATR…TTLS and VNQDSRETPKPEQYPQEPLPPPE. Residues 54–67 show a composition bias toward basic and acidic residues; it reads LRGERSSNSHREPP. PPR repeat units follow at residues 130 to 164, 165 to 199, 200 to 234, and 235 to 269; these read LIPNAVAMLDGLCKDGLVQEAMKLFGLMRDKGTIP, EVVIYTAVVEAFCKAHKIEDAKRIFRKMQNNGIAP, NAFSYGVLVQGLYNCNMLDDAVAFCSEMLESGHSP, and NVPTFVELVDALCRVKGVEQAQSAIDTLNQKGFAV.

This sequence belongs to the PPR family. P subfamily.

The protein is Pentatricopeptide repeat-containing protein At4g38150 of Arabidopsis thaliana (Mouse-ear cress).